Reading from the N-terminus, the 495-residue chain is Trigger factor (495 aa).

The PPIase FKBP-type domain maps to 169 to 254 (GDRVAMDYVG…VKDVAAPGAV (86 aa)). The tract at residues 441-495 (LAEDEGEAKAETKKAAPKKKAAAKTEAAEAGEGEEAAAPKKKAAPKKKAADESAE) is disordered.

It belongs to the FKBP-type PPIase family. Tig subfamily.

Its subcellular location is the cytoplasm. It carries out the reaction [protein]-peptidylproline (omega=180) = [protein]-peptidylproline (omega=0). Its function is as follows. Involved in protein export. Acts as a chaperone by maintaining the newly synthesized protein in an open conformation. Functions as a peptidyl-prolyl cis-trans isomerase. In Rhizobium etli (strain CIAT 652), this protein is Trigger factor.